Here is a 447-residue protein sequence, read N- to C-terminus: Na(+)-translocating NADH-quinone reductase subunit A (447 aa).

The protein belongs to the NqrA family. Composed of six subunits; NqrA, NqrB, NqrC, NqrD, NqrE and NqrF.

It carries out the reaction a ubiquinone + n Na(+)(in) + NADH + H(+) = a ubiquinol + n Na(+)(out) + NAD(+). Functionally, NQR complex catalyzes the reduction of ubiquinone-1 to ubiquinol by two successive reactions, coupled with the transport of Na(+) ions from the cytoplasm to the periplasm. NqrA to NqrE are probably involved in the second step, the conversion of ubisemiquinone to ubiquinol. This is Na(+)-translocating NADH-quinone reductase subunit A from Neisseria meningitidis serogroup C / serotype 2a (strain ATCC 700532 / DSM 15464 / FAM18).